The following is an 88-amino-acid chain: uncharacterized protein (88 aa).

A signal peptide spans 1 to 23; sequence MAVSGLRLTIVWGLLVLILTCQA. The span at 25 to 40 shows a compositional bias: basic and acidic residues; it reads DKPEGKPDEQPHDSGK. The disordered stretch occupies residues 25–45; the sequence is DKPEGKPDEQPHDSGKNSEPA.

It is found in the secreted. This is an uncharacterized protein from Bos taurus (Bovine).